Here is a 330-residue protein sequence, read N- to C-terminus: MENVSFSLDRTLWVFLLAMLGSTAGQPLGGESVCTARPLARYSITFTGKWSQTAFPKQYPLFRPPAQWSSLLGAAHSSDYSMWRKNEYVSNGLRDFAERGEAWALMKEIEAAGEKLQSVHAVFSAPAVPSGTGQTSAELEVHPRHSLVSFVVRIVPSPDWFVGIDSLDLCEGGRWKEQVVLDLYPHDAGTDSGFTFSSPNFATIPQDTVTEITASSPSHPANSFYYPRLKSLPPIAKVTFVRLRQSPRAFAPPSLDLASRGNEIVDSLSVPETPLDCEVSLWSSWGLCGGPCGKLGAKSRTRYVRVQPANNGTPCPELEEEAECAPDNCV.

Positions 1 to 25 (MENVSFSLDRTLWVFLLAMLGSTAG) are cleaved as a signal peptide. In terms of domain architecture, Spondin spans 30–220 (GESVCTARPL…EITASSPSHP (191 aa)). The cysteines at positions 34 and 170 are disulfide-linked. E140 contacts a divalent metal cation. Ca(2+)-binding residues include D159, D187, and D191. Residues 276-330 (DCEVSLWSSWGLCGGPCGKLGAKSRTRYVRVQPANNGTPCPELEEEAECAPDNCV) form the TSP type-1 domain. A C-linked (Man) tryptophan glycan is attached at W282.

In terms of assembly, monomer. Interacts with integrin. As to expression, abundantly expressed in the developing hippocampus.

It is found in the secreted. It localises to the extracellular space. Its subcellular location is the extracellular matrix. Its function is as follows. Cell adhesion protein that promotes adhesion and outgrowth of hippocampal embryonic neurons. Binds directly to bacteria and their components and functions as an opsonin for macrophage phagocytosis of bacteria. Essential in the initiation of the innate immune response and represents a unique pattern-recognition molecule in the ECM for microbial pathogens. The protein is Spondin-2 (Spon2) of Rattus norvegicus (Rat).